The chain runs to 213 residues: 2',3'-cyclic-nucleotide 3'-phosphodiesterase (213 aa).

Catalysis depends on histidine 39, which acts as the Proton donor/acceptor. Threonine 41 serves as a coordination point for substrate. The active-site Proton donor/acceptor is histidine 132. Positions 134 and 137 each coordinate substrate.

The protein belongs to the 2H phosphoesterase superfamily. CPD1 family.

The protein resides in the golgi apparatus. The enzyme catalyses a nucleoside 2',3'-cyclic phosphate + H2O = a nucleoside 2'-phosphate + H(+). In terms of biological role, involved in the metabolism of ADP-ribose 1',2'-cyclic phosphate which is produced as a consequence of tRNA splicing. This chain is 2',3'-cyclic-nucleotide 3'-phosphodiesterase (CPD1), found in Kluyveromyces lactis (strain ATCC 8585 / CBS 2359 / DSM 70799 / NBRC 1267 / NRRL Y-1140 / WM37) (Yeast).